A 130-amino-acid chain; its full sequence is Astrocytic phosphoprotein PEA-15 (130 aa).

Positions 3-81 (EYGTLLQDLT…RPDLLTMVVD (79 aa)) constitute a DED domain. Phosphoserine occurs at positions 61 and 90. A microtubule-binding region spans residues 98–107 (KLTRIPSAKK). At S104 the chain carries Phosphoserine; by PKC. S116 is subject to Phosphoserine; by CaMK2. A microtubule-binding region spans residues 122-129 (KLAPPPKK).

In terms of assembly, binds RPS6KA3, MAPK3 and MAPK1. Interacts with CASP8 and FADD. Transient interaction with PLD1 and PLD2. In terms of processing, phosphorylated by protein kinase C and calcium-calmodulin-dependent protein kinase. These phosphorylation events are modulated by neurotransmitters or hormones. Predominantly expressed in the brain. Low levels in some peripheral organs.

The protein resides in the cytoplasm. Blocks Ras-mediated inhibition of integrin activation and modulates the ERK MAP kinase cascade. Inhibits RPS6KA3 activities by retaining it in the cytoplasm. Inhibits both TNFRSF6- and TNFRSF1A-mediated CASP8 activity and apoptosis. Regulates glucose transport by controlling both the content of SLC2A1 glucose transporters on the plasma membrane and the insulin-dependent trafficking of SLC2A4 from the cell interior to the surface. The sequence is that of Astrocytic phosphoprotein PEA-15 (Pea15) from Mus musculus (Mouse).